The primary structure comprises 223 residues: Ubiquitin carboxyl-terminal hydrolase isozyme L1 (223 aa).

Met1 carries the N-acetylmethionine modification. The region spanning 2-221 is the UCH catalytic domain; it reads QLKPMEINPE…VRFSAVALCK (220 aa). The interaction with ubiquitin stretch occupies residues 5 to 10; it reads PMEINP. The active-site Nucleophile is Cys90. At Ser125 the chain carries Phosphoserine. The Proton donor role is filled by His161. An interaction with ubiquitin region spans residues 211–216; sequence EVRFSA. Cys220 carries the S-farnesyl cysteine lipid modification. The propeptide at 221 to 223 is removed in mature form; it reads KAA.

It belongs to the peptidase C12 family. As to quaternary structure, monomer. Homodimer. Interacts with COPS5 and SNCA. O-glycosylated. Expressed in brain, where it is found in neurons but not in oligodendrocytes or astrocytes. Found in the ganglion cell layer and the inner nuclear layer of the retina (at protein level). Expressed in brain and testis. In the brain, expression is at its lowest in replaceable neurons of hippocampus and olfactory bulb. Highly expressed in senescent pituitary. In skeletal muscle, primarily expressed in oxidative muscle fibers.

The protein resides in the cytoplasm. It is found in the endoplasmic reticulum membrane. It catalyses the reaction Thiol-dependent hydrolysis of ester, thioester, amide, peptide and isopeptide bonds formed by the C-terminal Gly of ubiquitin (a 76-residue protein attached to proteins as an intracellular targeting signal).. Its function is as follows. Deubiquitinase that plays a role in the regulation of several processes such as maintenance of synaptic function, cardiac function, inflammatory response or osteoclastogenesis. Abrogates the ubiquitination of multiple proteins including WWTR1/TAZ, EGFR, HIF1A and beta-site amyloid precursor protein cleaving enzyme 1/BACE1. In addition, recognizes and hydrolyzes a peptide bond at the C-terminal glycine of ubiquitin to maintain a stable pool of monoubiquitin that is a key requirement for the ubiquitin-proteasome and the autophagy-lysosome pathways. Regulates amyloid precursor protein/APP processing by promoting BACE1 degradation resulting in decreased amyloid beta production. Plays a role in the immune response by regulating the ability of MHC I molecules to reach cross-presentation compartments competent for generating Ag-MHC I complexes. Mediates the 'Lys-48'-linked deubiquitination of the transcriptional coactivator WWTR1/TAZ leading to its stabilization and inhibition of osteoclastogenesis. Deubiquitinates and stabilizes epidermal growth factor receptor EGFR to prevent its degradation and to activate its downstream mediators. Modulates oxidative activity in skeletal muscle by regulating key mitochondrial oxidative proteins. Enhances the activity of hypoxia-inducible factor 1-alpha/HIF1A by abrogateing its VHL E3 ligase-mediated ubiquitination and consequently inhibiting its degradation. The chain is Ubiquitin carboxyl-terminal hydrolase isozyme L1 (Uchl1) from Mus musculus (Mouse).